Here is a 123-residue protein sequence, read N- to C-terminus: Large ribosomal subunit protein bL19 (123 aa).

Belongs to the bacterial ribosomal protein bL19 family.

In terms of biological role, this protein is located at the 30S-50S ribosomal subunit interface and may play a role in the structure and function of the aminoacyl-tRNA binding site. In Ureaplasma urealyticum serovar 10 (strain ATCC 33699 / Western), this protein is Large ribosomal subunit protein bL19.